We begin with the raw amino-acid sequence, 487 residues long: UPF0276 protein SAV_2218 (487 aa).

Residues 1–285 (MVEEGTMERL…LGAIRKTLEK (285 aa)) are UPF0276. The tract at residues 286–487 (AGTRAGASAG…RATRRVLLRR (202 aa)) is unknown. Residues 319-348 (AGPRRGGADAQAAPRAAGTEALSAASTSTP) are disordered. A compositionally biased stretch (low complexity) spans 326-348 (ADAQAAPRAAGTEALSAASTSTP).

In the N-terminal section; belongs to the UPF0276 family.

The protein is UPF0276 protein SAV_2218 of Streptomyces avermitilis (strain ATCC 31267 / DSM 46492 / JCM 5070 / NBRC 14893 / NCIMB 12804 / NRRL 8165 / MA-4680).